Reading from the N-terminus, the 343-residue chain is Cell division protein ZipA (343 aa).

Residues 1–4 lie on the Periplasmic side of the membrane; it reads MDLN. A helical membrane pass occupies residues 5-25; that stretch reads TILIILGILALIGLVAHGIWS. The Cytoplasmic segment spans residues 26 to 343; sequence NRREKSQYFD…MAEAAYLARV (318 aa). A disordered region spans residues 39 to 98; sequence AFHRNPQSTGRPSAQASQPMTPNFAQPAKETEQIRQTYQEPQVRQMSSSPEQQTRPTAQA. Composition is skewed to polar residues over residues 43–62 and 72–95; these read NPQS…TPNF and IRQT…TRPT.

It belongs to the ZipA family. In terms of assembly, interacts with FtsZ via their C-terminal domains.

Its subcellular location is the cell inner membrane. Functionally, essential cell division protein that stabilizes the FtsZ protofilaments by cross-linking them and that serves as a cytoplasmic membrane anchor for the Z ring. Also required for the recruitment to the septal ring of downstream cell division proteins. The sequence is that of Cell division protein ZipA from Actinobacillus succinogenes (strain ATCC 55618 / DSM 22257 / CCUG 43843 / 130Z).